Consider the following 95-residue polypeptide: Small ribosomal subunit protein bS16 (95 aa).

This sequence belongs to the bacterial ribosomal protein bS16 family.

This is Small ribosomal subunit protein bS16 from Roseiflexus sp. (strain RS-1).